Consider the following 211-residue polypeptide: MIDTHDITGLILAGGRGSRMGGVDKGLQNFRGLPLALHTLMRLQPQVGDVMINANRNLAAYESFGVPVWPDGLADYAGPLAGFLTGLERCETPWLLTVPCDTPLFPPDLAARLAQAAMREGADIAMAAAPEADERDGTVRVRTQPVFCLLRVTLLESLVRFTQGGGRKIDRWTEQHACAVVPFDQPGDDPHAFYNANTLAELHALEGLGLR.

GTP-binding positions include 12-14, Lys25, Asn53, Asp71, and Asp101; that span reads LAG. Position 101 (Asp101) interacts with Mg(2+).

It belongs to the MobA family. Monomer. The cofactor is Mg(2+).

The protein resides in the cytoplasm. The enzyme catalyses Mo-molybdopterin + GTP + H(+) = Mo-molybdopterin guanine dinucleotide + diphosphate. Transfers a GMP moiety from GTP to Mo-molybdopterin (Mo-MPT) cofactor (Moco or molybdenum cofactor) to form Mo-molybdopterin guanine dinucleotide (Mo-MGD) cofactor. This is Molybdenum cofactor guanylyltransferase from Acidovorax sp. (strain JS42).